We begin with the raw amino-acid sequence, 1180 residues long: MTLQGRADLSGNQGNAAGRLATVHEPVVTQWAVHPPAPAHPSLLDKMEKAPPQPQHEGLKSKEHLPQQPAEGKTASRRVPRLRAVVESQAFKNILVDEMDMMHARAATLIQANWRGYWLRQKLISQMMAAKAIQEAWRRFNKRHILHSSKSLVKKTRAEEGDIPYHAPQQVRFQHPEENRLLSPPIMVNKETQFPSCDNLVLCRPQSSPLLQPPAAQGTPEPCVQGPHAARVRGLAFLPHQTVTIRFPCPVSLDAKCQPCLLTRTIRSTCLVHIEGDSVKTKRVSARTNKARAPETPLSRRYDQAVTRPSRAQTQGPVKAETPKAPFQICPGPMITKTLLQTYPVVSVTLPQTYPASTMTTTPPKTSPVPKVTIIKTPAQMYPGPTVTKTAPHTCPMPTMTKIQVHPTASRTGTPRQTCPATITAKNRPQVSLLASIMKSLPQVCPGPAMAKTPPQMHPVTTPAKNPLQTCLSATMSKTSSQRSPVGVTKPSPQTRLPAMITKTPAQLRSVATILKTLCLASPTVANVKAPPQVAVAAGTPNTSGSIHENPPKAKATVNVKQAAKVVKASSPSYLAEGKIRCLAQPHPGTGVPRAAAELPLEAEKIKTGTQKQAKTDMAFKTSVAVEMAGAPSWTKVAEEGDKPPHVYVPVDMAVTLPRGQLAAPLTNASSQRHPPCLSQRPLAAPLTKASSQGHLPTELTKTPSLAHLDTCLSKMHSQTHLATGAVKVQSQAPLATCLTKTQSRGQPITDITTCLIPAHQAADLSSNTHSQVLLTGSKVSNHACQRLGGLSAPPWAKPEDRQTQPQPHGHVPGKTTQGGPCPAACEVQGMLVPPMAPTGHSTCNVESWGDNGATRAQPSMPGQAVPCQEDTGPADAGVVGGQSWNRAWEPARGAASWDTWRNKAVVPPRRSGEPMVSMQAAEEIRILAVITIQAGVRGYLARRRIRLWHRGAMVIQATWRGYRVRRNLAHLCRATTTIQSAWRGYSTRRDQARHWQMLHPVTWVELGSRAGVMSDRSWFQDGRARTVSDHRCFQSCQAHACSVCHSLSSRIGSPPSVVMLVGSSPRTCHTCGRTQPTRVVQGMGQGTEGPGAVSWASAYQLAALSPRQPHRQDKAATAIQSAWRGFKIRQQMRQQQMAAKIVQATWRGHHTRSCLKNTEALLGPADPSASSRHMHWPGI.

The segment at 34–78 (HPPAPAHPSLLDKMEKAPPQPQHEGLKSKEHLPQQPAEGKTASRR) is disordered. An IQ 1 domain is found at 103–132 (HARAATLIQANWRGYWLRQKLISQMMAAKA). Disordered stretches follow at residues 283–324 (RVSA…ETPK), 476–496 (MSKTSSQRSPVGVTKPSPQTR), and 786–820 (QRLGGLSAPPWAKPEDRQTQPQPHGHVPGKTTQGG). 5 consecutive IQ domains span residues 926–955 (RILAVITIQAGVRGYLARRRIRLWHRGAMV), 956–978 (IQATWRGYRVRRNLAHLCRATTT), 979–1001 (IQSAWRGYSTRRDQARHWQMLHP), 1113–1142 (QDKAATAIQSAWRGFKIRQQMRQQQMAAKI), and 1143–1165 (VQATWRGHHTRSCLKNTEALLGP).

In terms of assembly, interacts with calmodulin.

Functionally, essential for spermiogenesis and fertilization. May be required for manchette assembly in elongating spermatids. This Homo sapiens (Human) protein is IQ domain-containing protein N.